The primary structure comprises 280 residues: Bifunctional protein FolD (280 aa).

Residues 166 to 168 (GRS) and Ser191 each bind NADP(+).

It belongs to the tetrahydrofolate dehydrogenase/cyclohydrolase family. Homodimer.

The enzyme catalyses (6R)-5,10-methylene-5,6,7,8-tetrahydrofolate + NADP(+) = (6R)-5,10-methenyltetrahydrofolate + NADPH. The catalysed reaction is (6R)-5,10-methenyltetrahydrofolate + H2O = (6R)-10-formyltetrahydrofolate + H(+). It participates in one-carbon metabolism; tetrahydrofolate interconversion. Functionally, catalyzes the oxidation of 5,10-methylenetetrahydrofolate to 5,10-methenyltetrahydrofolate and then the hydrolysis of 5,10-methenyltetrahydrofolate to 10-formyltetrahydrofolate. The polypeptide is Bifunctional protein FolD (Saccharophagus degradans (strain 2-40 / ATCC 43961 / DSM 17024)).